The sequence spans 1430 residues: FYVE, RhoGEF and PH domain-containing protein 6 (1430 aa).

The segment at 1–36 (MTSAAEIKKPPVAPKPKFVVANNKPAPPPIAPKPDI) is disordered. Positions 15 to 24 (KPKFVVANNK) are enriched in low complexity. S231 carries the post-translational modification Phosphoserine. Positions 330–351 (CVDTPSESTEEPGNSDSSSSCL) are disordered. Polar residues predominate over residues 334 to 351 (PSESTEEPGNSDSSSSCL). S515 carries the phosphoserine modification. The segment at 516 to 538 (EELLEKSSYPSSEEKSSEKSLER) is disordered. Over residues 527 to 538 (SEEKSSEKSLER) the composition is skewed to basic and acidic residues. Phosphoserine is present on residues S554, S605, S692, and S721. 2 disordered regions span residues 695–739 (NYSL…PYKS) and 800–869 (PDGQ…NGMK). A compositionally biased stretch (polar residues) spans 728-739 (SRESSSQAPYKS). A compositionally biased stretch (acidic residues) spans 831–847 (PSDEEEIINSSDEDDVS). Positions 851 to 868 (SKGEPDPLEDKQDEDNGM) are enriched in basic and acidic residues. Positions 871–1060 (KVHHIAKEIM…IEVANHANDT (190 aa)) constitute a DH domain. The 95-residue stretch at 1089-1183 (VFLKEGILMK…WLEAISRAIE (95 aa)) folds into the PH 1 domain. S1197 is subject to Phosphoserine. An FYVE-type zinc finger spans residues 1222–1281 (DTRATMCMICTSEFTLTWRRHHCRACGKIVCQACSSNKYGLDYLKNQPARVCEHCFQELQ). Positions 1228, 1231, 1244, 1247, 1252, 1255, 1273, and 1276 each coordinate Zn(2+). The 97-residue stretch at 1333 to 1429 (DSSMSGYLYR…WIEAFQEGTI (97 aa)) folds into the PH 2 domain.

The protein localises to the cytoplasm. Its subcellular location is the cytoskeleton. Functionally, may activate CDC42, a member of the Ras-like family of Rho- and Rac proteins, by exchanging bound GDP for free GTP. May play a role in regulating the actin cytoskeleton and cell shape. This is FYVE, RhoGEF and PH domain-containing protein 6 (FGD6) from Homo sapiens (Human).